The chain runs to 339 residues: uncharacterized protein (339 aa).

Positions 13 to 243 (LSLNKLDVGF…PATPFICEFI (231 aa)) constitute an ABC transporter domain. 45–52 (GPSGSGKS) lines the ATP pocket.

The protein belongs to the ABC transporter superfamily.

The protein resides in the cell inner membrane. Its function is as follows. Probably part of a binding-protein-dependent transport system y4fNOP. Probably responsible for energy coupling to the transport system. This is an uncharacterized protein from Sinorhizobium fredii (strain NBRC 101917 / NGR234).